The chain runs to 85 residues: Small ribosomal subunit protein bS20 (85 aa).

It belongs to the bacterial ribosomal protein bS20 family.

Binds directly to 16S ribosomal RNA. This is Small ribosomal subunit protein bS20 from Borreliella afzelii (strain PKo) (Borrelia afzelii).